The chain runs to 777 residues: Ral guanine nucleotide dissociation stimulator-like 2 (777 aa).

Residues 1–54 (MLPRPLRLLLDTSPPGGVVLSSFRSRDPEEGGGPGGLVVGGGQEEEEEEEEEAP) are disordered. Serine 13 bears the Phosphoserine mark. A compositionally biased stretch (gly residues) spans 31–42 (GGGPGGLVVGGG). The span at 43-54 (QEEEEEEEEEAP) shows a compositional bias: acidic residues. Positions 88-212 (SSRRLRAGTL…GSADLIRNLR (125 aa)) constitute an N-terminal Ras-GEF domain. Residues 243–513 (LADHLAEQLT…HRVSCEVEPP (271 aa)) enclose the Ras-GEF domain. The residue at position 409 (serine 409) is a Phosphoserine. Low complexity-rich tracts occupy residues 581–610 (SLDSALESSPSLHSPADPSHLSPPASSPRP) and 618–632 (ASCGSPLSGGAEEAS). 2 disordered regions span residues 581–644 (SLDS…GSGP) and 734–766 (RRSSTATPGVTSGPSASGTPPSEGGGGSFPRIK). The segment covering 633-644 (GGTGYGGEGSGP) has biased composition (gly residues). Positions 648–735 (DCRIIRVQME…HDFLLRQRRR (88 aa)) constitute a Ras-associating domain. The span at 740–755 (TPGVTSGPSASGTPPS) shows a compositional bias: low complexity.

As to quaternary structure, interacts with SAMD9.

Probable guanine nucleotide exchange factor. Putative effector of Ras and/or Rap. Associates with the GTP-bound form of Rap 1A and H-Ras in vitro. The polypeptide is Ral guanine nucleotide dissociation stimulator-like 2 (RGL2) (Homo sapiens (Human)).